Here is a 248-residue protein sequence, read N- to C-terminus: Myelin protein P0 (248 aa).

A signal peptide spans 1–29 (MAPGAPSSSPSPILAALLFSSLVLSPAQA). The region spanning 30-143 (IVVYTDKEVY…DIVGKTSQVT (114 aa)) is the Ig-like V-type domain. At 30-153 (IVVYTDKEVY…LYVFEKVPTR (124 aa)) the chain is on the extracellular side. The cysteines at positions 50 and 127 are disulfide-linked. Asn122 is a glycosylation site (N-linked (GlcNAc...) (complex) asparagine). A helical membrane pass occupies residues 154 to 179 (YGVVLGAVIGGVLGVVLLVLLLFYVV). Topologically, residues 180–248 (RYCWLRRQAA…GLGESRKDKK (69 aa)) are cytoplasmic. Ser210 bears the Phosphoserine; by PKC mark. A disordered region spans residues 222–248 (MLDHSRSTKAASEKKAKGLGESRKDKK). Positions 224-248 (DHSRSTKAASEKKAKGLGESRKDKK) are enriched in basic and acidic residues. A phosphoserine mark is found at Ser226 and Ser228. Phosphoserine; by PKC occurs at positions 233 and 243.

This sequence belongs to the myelin P0 protein family. Homodimer and homotetramer. In terms of processing, N-glycosylated; contains sulfate-substituted glycan.

It is found in the cell membrane. In terms of biological role, is an adhesion molecule necessary for normal myelination in the peripheral nervous system. It mediates adhesion between adjacent myelin wraps and ultimately drives myelin compaction. The protein is Myelin protein P0 (MPZ) of Equus caballus (Horse).